Consider the following 320-residue polypeptide: Peptidase 1 (320 aa).

Residues 1-18 form the signal peptide; sequence MKIVLAIASLLALSAVYA. A propeptide spans 19 to 98 (activation peptide); it reads RPSSIKTFEE…LKTQFDLNAE (80 aa). 3 disulfides stabilise this stretch: cysteine 102-cysteine 215, cysteine 129-cysteine 169, and cysteine 163-cysteine 201. Cysteine 132 is an active-site residue. N-linked (GlcNAc...) asparagine glycosylation occurs at asparagine 150. Active-site residues include histidine 268 and asparagine 288.

It belongs to the peptidase C1 family. Post-translationally, N-glycosylated. N-glycanase treatment does not completely remove carbohydrates, suggesting that the protein contains additional glycosylation sites.

It is found in the secreted. It carries out the reaction Broad endopeptidase specificity.. Thiol protease, with a preference for substrates with a large hydrophobic side chain in the P2 position, or with basic residues. This is Peptidase 1 (DERP1) from Dermatophagoides pteronyssinus (European house dust mite).